Consider the following 503-residue polypeptide: SusD-like protein P38 (503 aa).

The N-terminal stretch at 1–21 is a signal peptide; it reads MKKFKNISITFLILISLGVLN.

The protein belongs to the SusD family.

Its subcellular location is the cell outer membrane. Functionally, polysaccharide-binding protein probably involved in ulvan degradation. Ulvan is the main polysaccharide component of the Ulvales (green seaweed) cell wall. It is composed of disaccharide building blocks comprising 3-sulfated rhamnose (Rha3S) linked to D-glucuronic acid (GlcA), L-iduronic acid (IduA), or D-xylose (Xyl). The SusD-like protein may mediate ulvan oligomer-binding before transport in the periplasm for further degradation. In Formosa agariphila (strain DSM 15362 / KCTC 12365 / LMG 23005 / KMM 3901 / M-2Alg 35-1), this protein is SusD-like protein P38.